We begin with the raw amino-acid sequence, 419 residues long: CinA-like protein (419 aa).

Belongs to the CinA family.

In Acaryochloris marina (strain MBIC 11017), this protein is CinA-like protein.